A 285-amino-acid chain; its full sequence is Polyamine aminopropyltransferase (285 aa).

Residues 5–238 (EMWYETLHTG…GIMTFAWASD (234 aa)) enclose the PABS domain. Gln33 is a binding site for S-methyl-5'-thioadenosine. His64 and Asp88 together coordinate spermidine. S-methyl-5'-thioadenosine-binding positions include Glu108 and 140-141 (DG). Catalysis depends on Asp158, which acts as the Proton acceptor. A spermidine-binding site is contributed by 158 to 161 (DCTD). An S-methyl-5'-thioadenosine-binding site is contributed by Pro165.

The protein belongs to the spermidine/spermine synthase family. As to quaternary structure, homodimer or homotetramer.

The protein resides in the cytoplasm. It catalyses the reaction S-adenosyl 3-(methylsulfanyl)propylamine + putrescine = S-methyl-5'-thioadenosine + spermidine + H(+). It functions in the pathway amine and polyamine biosynthesis; spermidine biosynthesis; spermidine from putrescine: step 1/1. Catalyzes the irreversible transfer of a propylamine group from the amino donor S-adenosylmethioninamine (decarboxy-AdoMet) to putrescine (1,4-diaminobutane) to yield spermidine. In Erwinia tasmaniensis (strain DSM 17950 / CFBP 7177 / CIP 109463 / NCPPB 4357 / Et1/99), this protein is Polyamine aminopropyltransferase.